A 325-amino-acid chain; its full sequence is Olfactory receptor 6Y1 (325 aa).

The Extracellular portion of the chain corresponds to 1–30; the sequence is MTTIILEVDNHTVTTRFILLGFPTRPAFQL. Residue Asn10 is glycosylated (N-linked (GlcNAc...) asparagine). The chain crosses the membrane as a helical span at residues 31–51; the sequence is LFFSIFLATYLLTLLENLLII. Residues 52–59 are Cytoplasmic-facing; that stretch reads LAIHSDGQ. Residues 60–80 traverse the membrane as a helical segment; the sequence is LHKPMYFFLSHLSFLEMWYVT. Over 81-104 the chain is Extracellular; that stretch reads VISPKMLVDFLSHDKSISFNGCMT. A disulfide bond links Cys102 and Cys194. A helical membrane pass occupies residues 105-125; the sequence is QLYFFVTFVCTEYILLAIMAF. At 126-144 the chain is on the cytoplasmic side; the sequence is DRYVAICNPLRYPVIMTNQ. The chain crosses the membrane as a helical span at residues 145 to 165; that stretch reads LCGTLAGGCWFCGLMTAMIKM. Topologically, residues 166 to 202 are extracellular; the sequence is VFIAQLHYCGMPQINHYFCDISPLLNVSCEDASQAEM. Asn191 carries N-linked (GlcNAc...) asparagine glycosylation. The chain crosses the membrane as a helical span at residues 203–222; it reads VDFFLALMVIAIPLCVVVAS. Topologically, residues 223 to 242 are cytoplasmic; it reads YAAILATILRIPSAQGRQKA. A helical membrane pass occupies residues 243-263; the sequence is FSTCASHLTVVILFYSMTLFT. The Extracellular segment spans residues 264–276; it reads YARPKLMYAYNSN. Residues 277–297 form a helical membrane-spanning segment; sequence KVVSVLYTVIVPLLNPIIYCL. The Cytoplasmic portion of the chain corresponds to 298 to 325; sequence RNHEVKAALRKTIHCRGSGPQGNGAFSS.

The protein belongs to the G-protein coupled receptor 1 family.

It is found in the cell membrane. Odorant receptor. The chain is Olfactory receptor 6Y1 (OR6Y1) from Homo sapiens (Human).